The sequence spans 384 residues: CDP-diacylglycerol--serine O-phosphatidyltransferase (384 aa).

It belongs to the CDP-alcohol phosphatidyltransferase class-I family.

Its subcellular location is the membrane. The catalysed reaction is a CDP-1,2-diacyl-sn-glycerol + L-serine = a 1,2-diacyl-sn-glycero-3-phospho-L-serine + CMP + H(+). The protein operates within phospholipid metabolism; phosphatidylethanolamine biosynthesis; phosphatidylethanolamine from CDP-diacylglycerol: step 1/2. The chain is CDP-diacylglycerol--serine O-phosphatidyltransferase (PSS) from Encephalitozoon cuniculi (strain GB-M1) (Microsporidian parasite).